The following is a 192-amino-acid chain: ATP synthase subunit b 2 (192 aa).

A helical transmembrane segment spans residues 39 to 59; that stretch reads SGFLAQLIWLALAFGLLYYLM.

This sequence belongs to the ATPase B chain family. F-type ATPases have 2 components, F(1) - the catalytic core - and F(0) - the membrane proton channel. F(1) has five subunits: alpha(3), beta(3), gamma(1), delta(1), epsilon(1). F(0) has three main subunits: a(1), b(2) and c(10-14). The alpha and beta chains form an alternating ring which encloses part of the gamma chain. F(1) is attached to F(0) by a central stalk formed by the gamma and epsilon chains, while a peripheral stalk is formed by the delta and b chains.

The protein resides in the cell inner membrane. Its function is as follows. F(1)F(0) ATP synthase produces ATP from ADP in the presence of a proton or sodium gradient. F-type ATPases consist of two structural domains, F(1) containing the extramembraneous catalytic core and F(0) containing the membrane proton channel, linked together by a central stalk and a peripheral stalk. During catalysis, ATP synthesis in the catalytic domain of F(1) is coupled via a rotary mechanism of the central stalk subunits to proton translocation. In terms of biological role, component of the F(0) channel, it forms part of the peripheral stalk, linking F(1) to F(0). The b'-subunit is a diverged and duplicated form of b found in plants and photosynthetic bacteria. The sequence is that of ATP synthase subunit b 2 (atpF2) from Methylobacterium radiotolerans (strain ATCC 27329 / DSM 1819 / JCM 2831 / NBRC 15690 / NCIMB 10815 / 0-1).